The following is a 192-amino-acid chain: Molybdenum cofactor guanylyltransferase (192 aa).

GTP-binding positions include Leu10–Gly12, Lys23, Asn51, Asp69, and Asp99. Position 99 (Asp99) interacts with Mg(2+).

The protein belongs to the MobA family. In terms of assembly, monomer. Requires Mg(2+) as cofactor.

The protein localises to the cytoplasm. The catalysed reaction is Mo-molybdopterin + GTP + H(+) = Mo-molybdopterin guanine dinucleotide + diphosphate. Its function is as follows. Transfers a GMP moiety from GTP to Mo-molybdopterin (Mo-MPT) cofactor (Moco or molybdenum cofactor) to form Mo-molybdopterin guanine dinucleotide (Mo-MGD) cofactor. The chain is Molybdenum cofactor guanylyltransferase from Haemophilus influenzae (strain 86-028NP).